Reading from the N-terminus, the 407-residue chain is Cation efflux system protein CusB (407 aa).

The signal sequence occupies residues 1-28; sequence MKKIALIIGSMIAGGIISAAGFTWVAKA.

This sequence belongs to the membrane fusion protein (MFP) (TC 8.A.1) family. In terms of assembly, the cus efflux system is composed of CusA, CusB, CusC and CusF.

In terms of biological role, part of a cation efflux system that mediates resistance to copper and silver. The sequence is that of Cation efflux system protein CusB (cusB) from Escherichia coli (strain K12).